The primary structure comprises 169 residues: Peptide deformylase (169 aa).

Cys91 and His133 together coordinate Fe cation. Glu134 is an active-site residue. A Fe cation-binding site is contributed by His137.

The protein belongs to the polypeptide deformylase family. The cofactor is Fe(2+).

It carries out the reaction N-terminal N-formyl-L-methionyl-[peptide] + H2O = N-terminal L-methionyl-[peptide] + formate. Functionally, removes the formyl group from the N-terminal Met of newly synthesized proteins. Requires at least a dipeptide for an efficient rate of reaction. N-terminal L-methionine is a prerequisite for activity but the enzyme has broad specificity at other positions. The protein is Peptide deformylase of Shigella boydii serotype 18 (strain CDC 3083-94 / BS512).